Reading from the N-terminus, the 134-residue chain is UPF0357 protein YCL012C (134 aa).

Positions 1 to 23 are cleaved as a signal peptide; that stretch reads MKSLFYLKLLLWVVLLSLCLLMA. S71 and S74 each carry phosphoserine. A Glycyl lysine isopeptide (Lys-Gly) (interchain with G-Cter in ubiquitin) cross-link involves residue K86.

The protein belongs to the UPF0357 family.

This Saccharomyces cerevisiae (strain ATCC 204508 / S288c) (Baker's yeast) protein is UPF0357 protein YCL012C.